The sequence spans 357 residues: Outer membrane protein YedS (357 aa).

Residues 1 to 21 (MKRKVLAMLVPALLVAGAANA) form the signal peptide.

Belongs to the Gram-negative porin family.

Its subcellular location is the cell outer membrane. Functionally, forms pores that allow passive diffusion of small molecules across the outer membrane. Plays a role in resistance to carbapenems; this carbapenem-resistant, noncarbapenemase-producing clinical isolate has a deletion in ompF and a mutated marR gene that does not induce expression of this protein. However if this gene is overexpressed, or if wild-type marR is introduced, this leads to decreased resistance to the carbapenem antibiotics ertapenem, imipenem and meropenem. The protein is Outer membrane protein YedS of Escherichia coli.